A 187-amino-acid chain; its full sequence is Protein GrpE (187 aa).

The segment at 1 to 25 (MADEQNLDNRAPEETPAAEGTSAGE) is disordered.

The protein belongs to the GrpE family. In terms of assembly, homodimer.

The protein resides in the cytoplasm. Its function is as follows. Participates actively in the response to hyperosmotic and heat shock by preventing the aggregation of stress-denatured proteins, in association with DnaK and GrpE. It is the nucleotide exchange factor for DnaK and may function as a thermosensor. Unfolded proteins bind initially to DnaJ; upon interaction with the DnaJ-bound protein, DnaK hydrolyzes its bound ATP, resulting in the formation of a stable complex. GrpE releases ADP from DnaK; ATP binding to DnaK triggers the release of the substrate protein, thus completing the reaction cycle. Several rounds of ATP-dependent interactions between DnaJ, DnaK and GrpE are required for fully efficient folding. This chain is Protein GrpE, found in Azotobacter vinelandii (strain DJ / ATCC BAA-1303).